An 876-amino-acid chain; its full sequence is Alanine--tRNA ligase (876 aa).

Residue K74 is modified to N6-acetyllysine. 4 residues coordinate Zn(2+): H564, H568, C666, and H670.

It belongs to the class-II aminoacyl-tRNA synthetase family. In terms of assembly, homotetramer. It depends on Zn(2+) as a cofactor.

It localises to the cytoplasm. It catalyses the reaction tRNA(Ala) + L-alanine + ATP = L-alanyl-tRNA(Ala) + AMP + diphosphate. Functionally, catalyzes the attachment of alanine to tRNA(Ala) in a two-step reaction: alanine is first activated by ATP to form Ala-AMP and then transferred to the acceptor end of tRNA(Ala). Also edits incorrectly charged Ser-tRNA(Ala) and Gly-tRNA(Ala) via its editing domain. The sequence is that of Alanine--tRNA ligase from Escherichia coli (strain ATCC 8739 / DSM 1576 / NBRC 3972 / NCIMB 8545 / WDCM 00012 / Crooks).